The primary structure comprises 69 residues: Toxin Tma3 (69 aa).

The LCN-type CS-alpha/beta domain maps to 2 to 66; the sequence is KDDYPVDTAK…SPTKKSGRCN (65 aa). Cystine bridges form between cysteine 14–cysteine 65, cysteine 18–cysteine 41, cysteine 27–cysteine 48, and cysteine 31–cysteine 50.

Belongs to the long (4 C-C) scorpion toxin superfamily. Sodium channel inhibitor family. In terms of tissue distribution, expressed by the venom gland.

It localises to the secreted. Its function is as follows. Inhibits voltage-gated sodium channels (Nav). This toxin shows insect lethality against crickets. This chain is Toxin Tma3, found in Tityus macrochirus (Scorpion).